Consider the following 29-residue polypeptide: Cytochrome b6-f complex subunit 8 (29 aa).

The helical transmembrane segment at 3–23 threads the bilayer; the sequence is TVSIAWAALMVIFTFSISLVV.

It belongs to the PetN family. As to quaternary structure, the 4 large subunits of the cytochrome b6-f complex are cytochrome b6, subunit IV (17 kDa polypeptide, PetD), cytochrome f and the Rieske protein, while the 4 small subunits are PetG, PetL, PetM and PetN. The complex functions as a dimer.

It localises to the plastid. Its subcellular location is the chloroplast thylakoid membrane. Its function is as follows. Component of the cytochrome b6-f complex, which mediates electron transfer between photosystem II (PSII) and photosystem I (PSI), cyclic electron flow around PSI, and state transitions. The chain is Cytochrome b6-f complex subunit 8 from Psilotum nudum (Whisk fern).